Consider the following 434-residue polypeptide: Galactofuranosyl glycosyltransferase (434 aa).

Over 1–18 the chain is Cytoplasmic; that stretch reads MAPPRWHHDRRRMAIFVR. A helical; Signal-anchor for type II membrane protein membrane pass occupies residues 19–38; that stretch reads VGLYTLLFLMGYVVPLIIFY. N-linked (GlcNAc...) asparagine glycans are attached at residues Asn39, Asn100, Asn162, and Asn388. Residues 39–434 are Lumenal-facing; it reads NRSRADTFED…KLLDFPVDPS (396 aa).

It belongs to the glycosyltransferase 2 family.

It localises to the endoplasmic reticulum membrane. It participates in glycolipid biosynthesis; glycosylphosphatidylinositol-anchor biosynthesis. Glycosyltransferase that may be responsible for the addition of galactofuranosyl residues to the nascent lipophosphoglycan (LPG) chain. It could alternatively be involved in the synthesis of the galactofuranosyl donor. The chain is Galactofuranosyl glycosyltransferase (LPG1) from Leishmania donovani.